A 515-amino-acid polypeptide reads, in one-letter code: MSTLIPPPSKKQKKEAQLPREVAIIPKDLPNVSIKFQALDTGDNVGGALRVPGAISEKQLEELLNQLNGTSDDPVPYTFSCTIQGKKASDPVKTIDITDNLYSSLIKPGYNSTEDQITLLYTPRAVFKVKPVTRSSSAIAGHGSTILCSAFAPHTSSRMVTGAGDNTARIWDCDTQTPMHTLKGHYNWVLCVSWSPDGEVIATGSMDNTIRLWDPKSGQCLGDALRGHSKWITSLSWEPIHLVKPGSKPRLASSSKDGTIKIWDTVSRVCQYTMSGHTNSVSCVKWGGQGLLYSGSHDRTVRVWDINSQGRCINILKSHAHWVNHLSLSTDYALRIGAFDHTGKKPSTPEEAQKKALENYEKICKKNGNSEEMMVTASDDYTMFLWNPLKSTKPIARMTGHQKLVNHVAFSPDGRYIVSASFDNSIKLWDGRDGKFISTFRGHVASVYQVAWSSDCRLLVSCSKDTTLKVWDVRTRKLSVDLPGHKDEVYTVDWSVDGKRVCSGGKDKMVRLWTH.

The tract at residues 20-128 is interaction with MDN1; it reads REVAIIPKDL…LLYTPRAVFK (109 aa). The ubiquitin-like (UBL) domain stretch occupies residues 29–125; that stretch reads LPNVSIKFQA…QITLLYTPRA (97 aa). WD repeat units lie at residues 141–181, 184–223, 227–273, 276–314, 352–396, 400–439, 442–481, and 484–515; these read GHGS…PMHT, GHYNWVLCVSWSPDGEVIATGSMDNTIRLWDPKSGQCLGD, GHSK…CQYT, GHTNSVSCVKWGGQGLLYSGSHDRTVRVWDINSQGRCIN, AQKK…KPIA, GHQKLVNHVAFSPDGRYIVSASFDNSIKLWDGRDGKFIST, GHVASVYQVAWSSDCRLLVSCSKDTTLKVWDVRTRKLSVD, and GHKDEVYTVDWSVDGKRVCSGGKDKMVRLWTH.

It belongs to the NLE1/RSA4 family. Associates with the pre-60S ribosomal particle. Interacts (via WD repeats) with uL18 (RPL5). Interacts (via UBL domain) with MDN1 (via VWFA/MIDAS domain). Interacts (via WD repeats) with NSA2.

It is found in the nucleus. It localises to the nucleolus. Involved in ribosome biogenesis. Required for processing and efficient intra-nuclear transport of pre-60S ribosomal subunits. Interacts with the AAA-ATPase Midasin (MDN1/REA1), which is essential for the ATP-dependent dissociation of a group of nonribosomal factors from the pre-60S particle. The protein is Ribosome assembly protein 4 of Saccharomyces cerevisiae (strain ATCC 204508 / S288c) (Baker's yeast).